Reading from the N-terminus, the 361-residue chain is Phosphoserine aminotransferase (361 aa).

Residues S9 and R42 each contribute to the L-glutamate site. Pyridoxal 5'-phosphate is bound by residues 76–77 (AR), W102, T153, D173, and Q196. Residue K197 is modified to N6-(pyridoxal phosphate)lysine. Residue 238-239 (NT) coordinates pyridoxal 5'-phosphate.

The protein belongs to the class-V pyridoxal-phosphate-dependent aminotransferase family. SerC subfamily. Homodimer. Pyridoxal 5'-phosphate is required as a cofactor.

The protein resides in the cytoplasm. The catalysed reaction is O-phospho-L-serine + 2-oxoglutarate = 3-phosphooxypyruvate + L-glutamate. It catalyses the reaction 4-(phosphooxy)-L-threonine + 2-oxoglutarate = (R)-3-hydroxy-2-oxo-4-phosphooxybutanoate + L-glutamate. It participates in amino-acid biosynthesis; L-serine biosynthesis; L-serine from 3-phospho-D-glycerate: step 2/3. The protein operates within cofactor biosynthesis; pyridoxine 5'-phosphate biosynthesis; pyridoxine 5'-phosphate from D-erythrose 4-phosphate: step 3/5. Its function is as follows. Catalyzes the reversible conversion of 3-phosphohydroxypyruvate to phosphoserine and of 3-hydroxy-2-oxo-4-phosphonooxybutanoate to phosphohydroxythreonine. The chain is Phosphoserine aminotransferase from Sodalis glossinidius (strain morsitans).